We begin with the raw amino-acid sequence, 298 residues long: Ribosomal RNA small subunit methyltransferase H (298 aa).

S-adenosyl-L-methionine is bound by residues 31–33 (GGH), Asp50, Tyr80, Asp95, and Gln102. A disordered region spans residues 255-298 (AEKDLYGNTNKPFKSVGKAIDPDDEEKERNNRARSARLRIAERE).

The protein belongs to the methyltransferase superfamily. RsmH family.

Its subcellular location is the cytoplasm. It catalyses the reaction cytidine(1402) in 16S rRNA + S-adenosyl-L-methionine = N(4)-methylcytidine(1402) in 16S rRNA + S-adenosyl-L-homocysteine + H(+). Its function is as follows. Specifically methylates the N4 position of cytidine in position 1402 (C1402) of 16S rRNA. In Cytophaga hutchinsonii (strain ATCC 33406 / DSM 1761 / CIP 103989 / NBRC 15051 / NCIMB 9469 / D465), this protein is Ribosomal RNA small subunit methyltransferase H.